Consider the following 1286-residue polypeptide: DNA-directed RNA polymerase subunit beta' (1286 aa).

Residues Cys58, Cys60, Cys73, and Cys76 each contribute to the Zn(2+) site. 3 residues coordinate Mg(2+): Asp533, Asp535, and Asp537. Zn(2+)-binding residues include Cys867, Cys944, Cys951, and Cys954.

This sequence belongs to the RNA polymerase beta' chain family. In terms of assembly, the RNAP catalytic core consists of 2 alpha, 1 beta, 1 beta' and 1 omega subunit. When a sigma factor is associated with the core the holoenzyme is formed, which can initiate transcription. Mg(2+) serves as cofactor. It depends on Zn(2+) as a cofactor.

It catalyses the reaction RNA(n) + a ribonucleoside 5'-triphosphate = RNA(n+1) + diphosphate. In terms of biological role, DNA-dependent RNA polymerase catalyzes the transcription of DNA into RNA using the four ribonucleoside triphosphates as substrates. The polypeptide is DNA-directed RNA polymerase subunit beta' (Tropheryma whipplei (strain TW08/27) (Whipple's bacillus)).